The primary structure comprises 708 residues: Homeobox-leucine zipper protein HDG10 (708 aa).

Residues 1–24 (MDSSHNDSSSDEEGIDSNNRRHHS) are disordered. The segment at residues 16-75 (DSNNRRHHSNHQVQRLEAFFHECPHPDDSQRRQLGNELNLKHKQIKFWFQNRRTQARIHN) is a DNA-binding region (homeobox). A coiled-coil region spans residues 119-141 (LCNLQKLRTKNVILKTEYERLSS). Positions 162-188 (GPSTYGSTSNNRPASYGSSSNHLPQQS) are disordered. Polar residues predominate over residues 165–188 (TYGSTSNNRPASYGSSSNHLPQQS). Residues 218-456 (SQLEKNRMFE…LQRMCERLSL (239 aa)) form the START domain.

It belongs to the HD-ZIP homeobox family. Class IV subfamily. As to quaternary structure, interacts with ANT, BBM and AIL1. As to expression, expressed in exclusively in anthers with highest levels in the tapetum and pollen grains.

Its subcellular location is the nucleus. Its function is as follows. Probable transcription factor. The sequence is that of Homeobox-leucine zipper protein HDG10 from Arabidopsis thaliana (Mouse-ear cress).